We begin with the raw amino-acid sequence, 131 residues long: Small ribosomal subunit protein bS6 (131 aa).

The protein belongs to the bacterial ribosomal protein bS6 family.

Its function is as follows. Binds together with bS18 to 16S ribosomal RNA. This Borrelia hermsii (strain HS1 / DAH) protein is Small ribosomal subunit protein bS6.